Consider the following 459-residue polypeptide: Exodeoxyribonuclease 7 large subunit (459 aa).

Belongs to the XseA family. Heterooligomer composed of large and small subunits.

Its subcellular location is the cytoplasm. The catalysed reaction is Exonucleolytic cleavage in either 5'- to 3'- or 3'- to 5'-direction to yield nucleoside 5'-phosphates.. Its function is as follows. Bidirectionally degrades single-stranded DNA into large acid-insoluble oligonucleotides, which are then degraded further into small acid-soluble oligonucleotides. The polypeptide is Exodeoxyribonuclease 7 large subunit (Yersinia pestis bv. Antiqua (strain Antiqua)).